We begin with the raw amino-acid sequence, 72 residues long: Probable protein transport protein Sec61 subunit gamma (72 aa).

At 1–40 the chain is on the cytoplasmic side; it reads MSQKLQKPSFLSEYLRSIRLFSKKCVRPSGKELSMSIKRH. Residues 41–61 traverse the membrane as a helical segment; that stretch reads AIGIGFLGILGYAIKLIHIPI. The Extracellular portion of the chain corresponds to 62 to 72; it reads NNIIVSSPGKE.

Belongs to the SecE/SEC61-gamma family. Heterotrimeric complex composed of SEC61-alpha, SEC61-beta and SEC61-gamma.

The protein localises to the endoplasmic reticulum membrane. In terms of biological role, necessary for protein translocation in the endoplasmic reticulum. This chain is Probable protein transport protein Sec61 subunit gamma, found in Encephalitozoon cuniculi (strain GB-M1) (Microsporidian parasite).